A 355-amino-acid chain; its full sequence is MKIRIDIPHHPYDIQIEKGCMAQAGQWLRELWQPQKVVIVTDNHVASLYAEKVKLSLEDAGFQVAVFDFLEGEERKNLTTVQKVYEFLVKQGLTRSDGIVALGGGVVGDLAGFVASTYMRGIHFVQIPTSLTAQVDSSIGGKTGVNTPFAKNMVGTFAQPDGVLIDPLVLETLGKRELIEGMGEVIKYGLIEDPELWALLTGLNGSVESILEHAETLIEHSCQVKRKMVVEDELDNGIRLYLNFGHTIGHAIEATAGYGKVMHGEAVAMGMVQISKVAEEKGLMPAGITQSITEMCQKFGLPVDYENWEVDKLYQALTHDKKARGNTLKLVLVPELGSAIIHPVSLEEMKDYLVK.

Residues 71-76 (EGEERK), 105-109 (GVVGD), 129-130 (TS), K142, and K151 each bind NAD(+). Zn(2+) contacts are provided by E184, H246, and H263.

This sequence belongs to the sugar phosphate cyclases superfamily. Dehydroquinate synthase family. It depends on Co(2+) as a cofactor. Zn(2+) is required as a cofactor. The cofactor is NAD(+).

The protein localises to the cytoplasm. The catalysed reaction is 7-phospho-2-dehydro-3-deoxy-D-arabino-heptonate = 3-dehydroquinate + phosphate. It participates in metabolic intermediate biosynthesis; chorismate biosynthesis; chorismate from D-erythrose 4-phosphate and phosphoenolpyruvate: step 2/7. Its function is as follows. Catalyzes the conversion of 3-deoxy-D-arabino-heptulosonate 7-phosphate (DAHP) to dehydroquinate (DHQ). In Streptococcus pneumoniae (strain 70585), this protein is 3-dehydroquinate synthase.